A 102-amino-acid polypeptide reads, in one-letter code: MNVTEFHQNIEQVWAKIEEQLEAQDCDVDCDTQGSVFSITFQDRSQVVINKQEPLLELWLASRVGGFHFRYQNNNWTSNDGKDFWACLEEACAAHGEIVHFS.

It belongs to the frataxin family.

Its function is as follows. Involved in iron-sulfur (Fe-S) cluster assembly. May act as a regulator of Fe-S biogenesis. The protein is Iron-sulfur cluster assembly protein CyaY of Pasteurella multocida (strain Pm70).